A 129-amino-acid polypeptide reads, in one-letter code: Mini-ribonuclease 3-like protein (129 aa).

The active site involves Asp23.

The protein belongs to the MrnC RNase family.

Functionally, might be a ribonuclease involved in RNA processing. The polypeptide is Mini-ribonuclease 3-like protein (mrnCL) (Fusobacterium nucleatum subsp. nucleatum (strain ATCC 25586 / DSM 15643 / BCRC 10681 / CIP 101130 / JCM 8532 / KCTC 2640 / LMG 13131 / VPI 4355)).